The following is a 1131-amino-acid chain: Probable chloride channel protein UM03490-D (1131 aa).

12 consecutive transmembrane segments (helical) span residues 137–157, 206–226, 305–325, 341–361, 380–397, 414–434, 485–505, 518–538, 577–597, 603–623, 643–663, and 680–702; these read GVIV…SLAT, VTVT…PILP, FPAW…CAHL, IKCI…TLAI, GPAV…ASFF, SSAA…LFSL, FEIM…AFVI, YLVK…AFVG, MVNS…VSYG, GIFV…GILV, VPCI…LAGV, and ALTY…DWFS. 2 disordered regions span residues 815 to 835 and 858 to 928; these read DGVE…LSVA and ATGA…AGGG. The segment covering 866 to 877 has biased composition (low complexity); sequence GLGSTSATGVAS. The region spanning 944 to 1000 is the CBS domain; that stretch reads IDPTPLIVQPGMPLETVMDMFKNLGPRVILVVEYGRLSGLVTVKDVLKRIAMQEKAE. Positions 1061–1078 are enriched in low complexity; it reads RASASRGGAPGSQAGQAR. The disordered stretch occupies residues 1061–1131; the sequence is RASASRGGAP…VLGAQDDDDE (71 aa). Polar residues predominate over residues 1104 to 1113; the sequence is STRQTSATKN.

Belongs to the chloride channel (TC 2.A.49) family.

The protein localises to the membrane. In terms of biological role, voltage-gated chloride channel. This chain is Probable chloride channel protein UM03490-D, found in Mycosarcoma maydis (Corn smut fungus).